The primary structure comprises 844 residues: Serrate RNA effector molecule homolog B (844 aa).

Disordered stretches follow at residues 1–90 (MADS…HGSD), 277–401 (EAAK…PRPL), 555–575 (ELLS…GNPT), and 794–825 (PNPY…MRGD). Composition is skewed to basic and acidic residues over residues 16–73 (FRRE…RHDI) and 277–337 (EAAK…ETRK). Acidic residues predominate over residues 349 to 359 (SDDGSDSESDT). The span at 376-397 (DTPKKEEETEKPKEKPKEDTVK) shows a compositional bias: basic and acidic residues.

Belongs to the ARS2 family. Interacts ncbp1/cbp80.

The protein localises to the nucleus. Its subcellular location is the nucleoplasm. It localises to the cytoplasm. Its function is as follows. Acts as a mediator between the cap-binding complex (CBC) and the primary microRNAs (miRNAs) processing machinery during cell proliferation. Contributes to the stability and delivery of capped primary miRNA transcripts to the primary miRNA processing complex, thereby playing a role in RNA-mediated gene silencing (RNAi) by miRNAs. This chain is Serrate RNA effector molecule homolog B (srrt-b), found in Xenopus laevis (African clawed frog).